The chain runs to 428 residues: Forkhead box protein B2 (428 aa).

A DNA-binding region (fork-head) is located at residues 12–103 (QKPPYSYISL…GDMFENGSFL (92 aa)). Disordered regions lie at residues 118–217 (HLHS…MQEA) and 408–428 (PTAA…LVHS). The span at 136 to 163 (LHPHHPHHAHHHHHHHHHAAHHHHHHHP) shows a compositional bias: basic residues. 2 stretches are compositionally biased toward pro residues: residues 164–174 (PQPPPPPPPHM) and 183–192 (APAPQPPHLP). Low complexity predominate over residues 193-217 (SQPAQQPQPQSQPPQTSHPGKMQEA).

It is found in the nucleus. Transcription factor. The protein is Forkhead box protein B2 (Foxb2) of Mus musculus (Mouse).